The primary structure comprises 126 residues: MATQAKVSAEDQALLNKFARSYQLQTQLKAECKEMKTLVENINEATDEVLLLDDEDSASIPCRIGSCFVHFNSDSLNEHLEAKKASTETVLAEKTNELETITAEMERIKKVLYGKFGDQINLDAEE.

The protein belongs to the prefoldin subunit beta family. As to quaternary structure, heterohexamer of two PFD-alpha type and four PFD-beta type subunits.

In terms of biological role, binds specifically to cytosolic chaperonin (c-CPN) and transfers target proteins to it. Binds to nascent polypeptide chain and promotes folding in an environment in which there are many competing pathways for nonnative proteins. Appears to play a non-essential role. The protein is Probable prefoldin subunit 4 of Caenorhabditis briggsae.